The following is a 133-amino-acid chain: Nickel-responsive regulator (133 aa).

4 residues coordinate Ni(2+): His-76, His-87, His-89, and Cys-95.

The protein belongs to the transcriptional regulatory CopG/NikR family. As to quaternary structure, homotetramer. Requires Ni(2+) as cofactor.

Transcriptional repressor of the nikABCDE operon. Is active in the presence of excessive concentrations of intracellular nickel. The chain is Nickel-responsive regulator from Shigella dysenteriae serotype 1 (strain Sd197).